A 125-amino-acid polypeptide reads, in one-letter code: Small ribosomal subunit protein uS12 (125 aa).

The tract at residues 1 to 30 (MPTISQLVRKPRAAKPLKSKVPALGNSPQK) is disordered. The segment covering 9–18 (RKPRAAKPLK) has biased composition (basic residues). Asp89 is subject to 3-methylthioaspartic acid. The tract at residues 103–125 (DTAGVKDRKQGRSKYGAKKPKSA) is disordered. Positions 113–125 (GRSKYGAKKPKSA) are enriched in basic residues.

This sequence belongs to the universal ribosomal protein uS12 family. Part of the 30S ribosomal subunit. Contacts proteins S8 and S17. May interact with IF1 in the 30S initiation complex.

Its function is as follows. With S4 and S5 plays an important role in translational accuracy. In terms of biological role, interacts with and stabilizes bases of the 16S rRNA that are involved in tRNA selection in the A site and with the mRNA backbone. Located at the interface of the 30S and 50S subunits, it traverses the body of the 30S subunit contacting proteins on the other side and probably holding the rRNA structure together. The combined cluster of proteins S8, S12 and S17 appears to hold together the shoulder and platform of the 30S subunit. The sequence is that of Small ribosomal subunit protein uS12 from Nitrosospira multiformis (strain ATCC 25196 / NCIMB 11849 / C 71).